A 314-amino-acid chain; its full sequence is MFDKIMPLIGSLLLVICVMVGVAFLTLLERKVLGYIQIRKGPNKVGFNGLLQPFSDAVKLFTKEQTYPLLSNYISYYFSPIFSLFLSLVIWMCIPYLIKLYSFNLGVLFFLCCTSLGVYTVMIAGWSSNSNYALLGGLRAVAQTISYEVSLALILLSFIFLIGNYNFLNFYSYQSYIWFIFFCFPLGLVWLASCLAETNRTPFDFAEGESELVSGFNVEYSSGGFALIFLAEYSSILFMSMLFVVIFLGSDIYSLMFFFKLTFISFVFIWVRGTLPRFRYDKLMYLAWKSFLPLSLNYLFFFVGLKIFFISLLF.

The next 8 helical transmembrane spans lie at 5–25 (IMPLIGSLLLVICVMVGVAFL), 78–98 (FSPIFSLFLSLVIWMCIPYLI), 105–125 (LGVLFFLCCTSLGVYTVMIAG), 151–171 (LALILLSFIFLIGNYNFLNFY), 176–196 (YIWFIFFCFPLGLVWLASCLA), 227–247 (LIFLAEYSSILFMSMLFVVIF), 251–271 (DIYSLMFFFKLTFISFVFIWV), and 294–314 (LSLNYLFFFVGLKIFFISLLF).

Belongs to the complex I subunit 1 family.

The protein localises to the mitochondrion inner membrane. It catalyses the reaction a ubiquinone + NADH + 5 H(+)(in) = a ubiquinol + NAD(+) + 4 H(+)(out). Core subunit of the mitochondrial membrane respiratory chain NADH dehydrogenase (Complex I) that is believed to belong to the minimal assembly required for catalysis. Complex I functions in the transfer of electrons from NADH to the respiratory chain. The immediate electron acceptor for the enzyme is believed to be ubiquinone. This is NADH-ubiquinone oxidoreductase chain 1 (ND1) from Anopheles quadrimaculatus (Common malaria mosquito).